The primary structure comprises 66 residues: Brevinin-1DYb (66 aa).

The signal sequence occupies residues 1-22; it reads MFTLKKSLLLLFFLGTISLSLC. Residues 23–44 constitute a propeptide that is removed on maturation; the sequence is EEERNAEEERRDYPEERDVEVE. C60 and C66 are disulfide-bonded.

Expressed by the skin glands.

Its subcellular location is the secreted. Antimicrobial peptide. Has low activity against the Gram-positive bacterium S.aureus and the Gram-negative bacterium E.coli (MIC&lt;15 uM). Has a strong hemolytic activity. The polypeptide is Brevinin-1DYb (Rana dybowskii (Dybovsky's frog)).